The following is a 218-amino-acid chain: Uracil-DNA glycosylase (218 aa).

D68 functions as the Proton acceptor in the catalytic mechanism.

It belongs to the uracil-DNA glycosylase (UDG) superfamily. UNG family. Homodimer. Interacts with protein OPG148. Component of the Uracil-DNA glycosylase(UDG)-OPG148-polymerase complex; OPG148 and UDG form a heterodimeric processivity factor that associates with OPG71 to form the processive polymerase holoenzyme.

It carries out the reaction Hydrolyzes single-stranded DNA or mismatched double-stranded DNA and polynucleotides, releasing free uracil.. Plays an essential role in viral replication as a component of the DNA polymerase processivity factor. Excises uracil residues from the DNA which can arise as a result of misincorporation of dUMP residues by DNA polymerase or due to deamination of cytosine. In Bos taurus (Bovine), this protein is Uracil-DNA glycosylase (OPG116).